The sequence spans 209 residues: Thymidylate kinase (209 aa).

10–17 (GPEGAGKT) provides a ligand contact to ATP.

Belongs to the thymidylate kinase family.

The catalysed reaction is dTMP + ATP = dTDP + ADP. Functionally, phosphorylation of dTMP to form dTDP in both de novo and salvage pathways of dTTP synthesis. This Anoxybacillus flavithermus (strain DSM 21510 / WK1) protein is Thymidylate kinase.